The chain runs to 552 residues: E3 ubiquitin-protein ligase MGRN1 (552 aa).

Gly-2 carries N-myristoyl glycine lipidation. The RING-type zinc finger occupies 278-317 (CVVCLSDLRDTLILPCRHLCLCTSCADTLRYQANNCPICR). Residues 355–384 (SCPFKKSKPHPASLASKKPKRETNSDSVPP) are disordered. Positions 406–409 (PSAP) match the Required for TSG101-binding motif. Tyr-411 is modified (phosphotyrosine). Residues 439-552 (SSRQKGRPQS…PDSCSVGIDE (114 aa)) are disordered. Residues 450-460 (APDSTLRSPSS) show a composition bias toward polar residues. Residues 464–475 (EEDEEKLSEDVD) are compositionally biased toward acidic residues. Residue Ser-471 is modified to Phosphoserine. Positions 504-523 (SSSPQQGTRAASIENVLQDS) are enriched in polar residues. Ser-524 carries the post-translational modification Phosphoserine.

Interacts with MC1R and MC4R, but not with TBXA2R. Interacts with TSG101. Interacts with mislocalized cytosolically exposed PRNP; this interaction alters MGRN1 subcellular location and causes lysosomal enlargement. Autoubiquitinated in vitro.

It localises to the early endosome. It is found in the cytoplasm. The protein resides in the cytosol. The protein localises to the nucleus. Its subcellular location is the cell membrane. The enzyme catalyses S-ubiquitinyl-[E2 ubiquitin-conjugating enzyme]-L-cysteine + [acceptor protein]-L-lysine = [E2 ubiquitin-conjugating enzyme]-L-cysteine + N(6)-ubiquitinyl-[acceptor protein]-L-lysine.. Its pathway is protein modification; protein ubiquitination. Its function is as follows. E3 ubiquitin-protein ligase. Mediates monoubiquitination at multiple sites of TSG101 in the presence of UBE2D1, but not of UBE2G1, nor UBE2H. Plays a role in the regulation of endosome-to-lysosome trafficking. Impairs MC1R- and MC4R-signaling by competing with GNAS-binding to MCRs and inhibiting agonist-induced cAMP production. Does not inhibit ADRB2-signaling. Does not promote MC1R ubiquitination. Acts also as a negative regulator of hedgehog signaling. This chain is E3 ubiquitin-protein ligase MGRN1 (MGRN1), found in Homo sapiens (Human).